The primary structure comprises 116 residues: Translation initiation factor 1A (116 aa).

Residues methionine 1 to aspartate 25 form a disordered region. The 75-residue stretch at glycine 17–glycine 91 folds into the S1-like domain.

The protein belongs to the eIF-1A family.

Seems to be required for maximal rate of protein biosynthesis. Enhances ribosome dissociation into subunits and stabilizes the binding of the initiator Met-tRNA(I) to 40 S ribosomal subunits. The polypeptide is Translation initiation factor 1A (eIF1A) (Desulfurococcus amylolyticus (strain DSM 18924 / JCM 16383 / VKM B-2413 / 1221n) (Desulfurococcus kamchatkensis)).